We begin with the raw amino-acid sequence, 194 residues long: Heme transporter hrg-1 (194 aa).

The next 4 helical transmembrane spans lie at 45–65 (QIWI…VFAI), 71–91 (IAVT…HLHL), 113–133 (GATV…VAGI), and 143–163 (LMGA…KWSA). Residues 182–183 (LL) carry the Di-leucine motif motif.

It belongs to the HRG family. As to expression, specifically expressed in the intestinal cells in larvae and adults.

The protein localises to the endosome membrane. Its subcellular location is the lysosome membrane. Functionally, heme transporter that regulates intracellular heme availability through the endosomal or lysosomal compartment. This is Heme transporter hrg-1 (hrg-1) from Caenorhabditis elegans.